A 192-amino-acid polypeptide reads, in one-letter code: Small ribosomal subunit protein uS5 (192 aa).

The region spanning 22–85 is the S5 DRBM domain; it reads LVDKLVTINR…DRAKRAMIRV (64 aa).

The protein belongs to the universal ribosomal protein uS5 family. In terms of assembly, part of the 30S ribosomal subunit. Contacts proteins S4 and S8.

In terms of biological role, with S4 and S12 plays an important role in translational accuracy. Functionally, located at the back of the 30S subunit body where it stabilizes the conformation of the head with respect to the body. The chain is Small ribosomal subunit protein uS5 from Gluconacetobacter diazotrophicus (strain ATCC 49037 / DSM 5601 / CCUG 37298 / CIP 103539 / LMG 7603 / PAl5).